The chain runs to 504 residues: Cytochrome P450 3A16 (504 aa).

Residue cysteine 443 coordinates heme.

The protein belongs to the cytochrome P450 family. The cofactor is heme.

The protein localises to the endoplasmic reticulum membrane. It is found in the microsome membrane. It carries out the reaction an organic molecule + reduced [NADPH--hemoprotein reductase] + O2 = an alcohol + oxidized [NADPH--hemoprotein reductase] + H2O + H(+). In terms of biological role, cytochromes P450 are a group of heme-thiolate monooxygenases. In liver microsomes, this enzyme is involved in an NADPH-dependent electron transport pathway. It oxidizes a variety of structurally unrelated compounds, including steroids, fatty acids, and xenobiotics. The protein is Cytochrome P450 3A16 (Cyp3a16) of Mus musculus (Mouse).